Consider the following 474-residue polypeptide: tRNA-2-methylthio-N(6)-dimethylallyladenosine synthase (474 aa).

In terms of domain architecture, MTTase N-terminal spans 3–120; it reads KKLHIKTWGC…LPEMINQVKG (118 aa). [4Fe-4S] cluster-binding residues include C12, C49, C83, C157, C161, and C164. One can recognise a Radical SAM core domain in the interval 143 to 375; sequence RAEGPTAFVS…QERINQQAMA (233 aa). The region spanning 378-441 is the TRAM domain; that stretch reads RRMLGTTQRI…PNSLRGKVIR (64 aa).

The protein belongs to the methylthiotransferase family. MiaB subfamily. In terms of assembly, monomer. It depends on [4Fe-4S] cluster as a cofactor.

The protein localises to the cytoplasm. The catalysed reaction is N(6)-dimethylallyladenosine(37) in tRNA + (sulfur carrier)-SH + AH2 + 2 S-adenosyl-L-methionine = 2-methylsulfanyl-N(6)-dimethylallyladenosine(37) in tRNA + (sulfur carrier)-H + 5'-deoxyadenosine + L-methionine + A + S-adenosyl-L-homocysteine + 2 H(+). In terms of biological role, catalyzes the methylthiolation of N6-(dimethylallyl)adenosine (i(6)A), leading to the formation of 2-methylthio-N6-(dimethylallyl)adenosine (ms(2)i(6)A) at position 37 in tRNAs that read codons beginning with uridine. This is tRNA-2-methylthio-N(6)-dimethylallyladenosine synthase from Cronobacter sakazakii (strain ATCC BAA-894) (Enterobacter sakazakii).